A 335-amino-acid chain; its full sequence is tRNA N6-adenosine threonylcarbamoyltransferase (335 aa).

Positions 111 and 115 each coordinate Fe cation. Residues 133–137 (LISGG), Asp166, Gly179, and Asn276 contribute to the substrate site. Asp301 provides a ligand contact to Fe cation.

The protein belongs to the KAE1 / TsaD family. Fe(2+) is required as a cofactor.

It localises to the cytoplasm. It catalyses the reaction L-threonylcarbamoyladenylate + adenosine(37) in tRNA = N(6)-L-threonylcarbamoyladenosine(37) in tRNA + AMP + H(+). Required for the formation of a threonylcarbamoyl group on adenosine at position 37 (t(6)A37) in tRNAs that read codons beginning with adenine. Is involved in the transfer of the threonylcarbamoyl moiety of threonylcarbamoyl-AMP (TC-AMP) to the N6 group of A37, together with TsaE and TsaB. TsaD likely plays a direct catalytic role in this reaction. The chain is tRNA N6-adenosine threonylcarbamoyltransferase from Wolbachia sp. subsp. Brugia malayi (strain TRS).